A 240-amino-acid polypeptide reads, in one-letter code: MCTLEKRGDLFLLTLTGDGEHRFHPDTIATILSLLEQAKSQSTRGSILITTANGKFFSNGFDLAWAQTAGSKTGAANRLHQMVESFKPVVAALLDLPMPTIAALNGHAAAAGLILALSHDYVFMRKDRGVLYMSEVDIGLSMPDYFSALVRAKIGTSAARRELLLSGKKIRGEEAVGLGIVDSAAYDSEEGVVVASVRLGEKLAAKKWSGEVYASIRKSLYPELCGILGLETRVFATPKL.

Residues Pro-238–Leu-240 carry the Microbody targeting signal motif.

It belongs to the enoyl-CoA hydratase/isomerase family.

The protein localises to the peroxisome. The enzyme catalyses a (3Z)-enoyl-CoA = a 4-saturated (2E)-enoyl-CoA. The catalysed reaction is a (3E)-enoyl-CoA = a 4-saturated (2E)-enoyl-CoA. The protein operates within lipid metabolism; fatty acid beta-oxidation. In terms of biological role, able to isomerize both 3-cis and 3-trans double bonds into the 2-trans form in a range of enoyl-CoA species. Essential for the beta oxidation of unsaturated fatty acids. Involved with IBR1 and IBR3 in the peroxisomal beta-oxidation of indole-3-butyric acid (IBA) to form indole-3-acetic acid (IAA), a biologically active auxin. The sequence is that of Enoyl-CoA delta isomerase 2, peroxisomal from Arabidopsis thaliana (Mouse-ear cress).